A 236-amino-acid polypeptide reads, in one-letter code: 2,3,4,5-tetrahydropyridine-2,6-dicarboxylate N-acetyltransferase (236 aa).

This sequence belongs to the transferase hexapeptide repeat family. DapH subfamily.

The catalysed reaction is (S)-2,3,4,5-tetrahydrodipicolinate + acetyl-CoA + H2O = L-2-acetamido-6-oxoheptanedioate + CoA. It functions in the pathway amino-acid biosynthesis; L-lysine biosynthesis via DAP pathway; LL-2,6-diaminopimelate from (S)-tetrahydrodipicolinate (acetylase route): step 1/3. Its function is as follows. Catalyzes the transfer of an acetyl group from acetyl-CoA to tetrahydrodipicolinate. The sequence is that of 2,3,4,5-tetrahydropyridine-2,6-dicarboxylate N-acetyltransferase from Lactiplantibacillus plantarum (strain ATCC BAA-793 / NCIMB 8826 / WCFS1) (Lactobacillus plantarum).